A 253-amino-acid polypeptide reads, in one-letter code: Small ribosomal subunit protein uS2 (253 aa).

It belongs to the universal ribosomal protein uS2 family.

This chain is Small ribosomal subunit protein uS2, found in Cereibacter sphaeroides (strain ATCC 17023 / DSM 158 / JCM 6121 / CCUG 31486 / LMG 2827 / NBRC 12203 / NCIMB 8253 / ATH 2.4.1.) (Rhodobacter sphaeroides).